A 505-amino-acid chain; its full sequence is Ent-kaurene oxidase 2 (505 aa).

The chain crosses the membrane as a helical span at residues 3–23 (AFVPGGAGAAAAAVGGFVAAA). Position 449 (Cys-449) interacts with heme.

It belongs to the cytochrome P450 family. The cofactor is heme. In terms of tissue distribution, widely expressed.

The protein resides in the membrane. It carries out the reaction ent-kaur-16-ene + 3 reduced [NADPH--hemoprotein reductase] + 3 O2 = ent-kaur-16-en-19-oate + 3 oxidized [NADPH--hemoprotein reductase] + 4 H2O + 4 H(+). It functions in the pathway plant hormone biosynthesis; gibberellin biosynthesis. Its function is as follows. Catalyzes three successive oxidations of the 4-methyl group of ent-kaurene giving kaurenoic acid, a key step in gibberellins (GAs) biosynthesis. GAs, which are involved many processes, including stem elongation, play a central role in plant development. The protein is Ent-kaurene oxidase 2 of Oryza sativa subsp. japonica (Rice).